The primary structure comprises 287 residues: rRNA adenine N-6-methyltransferase (287 aa).

Residues 1–13 (MKKKNHKYRGKKL) show a composition bias toward basic residues. A disordered region spans residues 1–21 (MKKKNHKYRGKKLNRGESPNF). His25, Met27, Gly52, Glu73, Asp98, and Asn114 together coordinate S-adenosyl-L-methionine.

It belongs to the class I-like SAM-binding methyltransferase superfamily. rRNA adenine N(6)-methyltransferase family. As to quaternary structure, homodimer.

Involved in erythromycin resistance. The protein is rRNA adenine N-6-methyltransferase (ermJ) of Bacillus anthracis.